A 123-amino-acid polypeptide reads, in one-letter code: Angiogenin-2 (123 aa).

Pyrrolidone carboxylic acid is present on glutamine 1. Catalysis depends on histidine 12, which acts as the Proton acceptor. 3 disulfides stabilise this stretch: cysteine 25–cysteine 80, cysteine 38–cysteine 91, and cysteine 56–cysteine 106. Positions 30 to 34 (ERRNM) match the Nucleolar localization signal motif. A glycan (N-linked (GlcNAc...) asparagine) is linked at asparagine 33. The Zn(2+) site is built by aspartate 40, histidine 82, and histidine 113. The Proton donor role is filled by histidine 113.

This sequence belongs to the pancreatic ribonuclease family. Serum and milk.

It is found in the cytoplasmic vesicle. Its subcellular location is the secretory vesicle lumen. The protein localises to the secreted. It localises to the nucleus. The protein resides in the nucleolus. With respect to regulation, divalent metal ions, such as Cu2+ and Zn2+, may inhibit the ribonucleolytic activity. In terms of biological role, binds tightly to placental ribonuclease inhibitor and has very low ribonuclease activity. Has potent angiogenic activity. Angiogenin induces vascularization of normal and malignant tissues. Abolishes protein synthesis by specifically hydrolyzing cellular tRNAs. This is Angiogenin-2 from Bos taurus (Bovine).